The chain runs to 430 residues: Enolase (430 aa).

Q163 contacts (2R)-2-phosphoglycerate. Catalysis depends on E205, which acts as the Proton donor. Residues D242, E288, and D315 each coordinate Mg(2+). (2R)-2-phosphoglycerate-binding residues include K340, R369, S370, and K391. The active-site Proton acceptor is the K340.

Belongs to the enolase family. Mg(2+) is required as a cofactor.

It is found in the cytoplasm. The protein localises to the secreted. Its subcellular location is the cell surface. It carries out the reaction (2R)-2-phosphoglycerate = phosphoenolpyruvate + H2O. Its pathway is carbohydrate degradation; glycolysis; pyruvate from D-glyceraldehyde 3-phosphate: step 4/5. In terms of biological role, catalyzes the reversible conversion of 2-phosphoglycerate (2-PG) into phosphoenolpyruvate (PEP). It is essential for the degradation of carbohydrates via glycolysis. This Onion yellows phytoplasma (strain OY-M) protein is Enolase.